A 101-amino-acid chain; its full sequence is Small ribosomal subunit protein uS14 (101 aa).

Positions 36 to 61 (ASAEDRRAARQKLQSLPRNSSPVRQR) are disordered. Residues 47–59 (KLQSLPRNSSPVR) are compositionally biased toward polar residues.

This sequence belongs to the universal ribosomal protein uS14 family. Part of the 30S ribosomal subunit. Contacts proteins S3 and S10.

Its function is as follows. Binds 16S rRNA, required for the assembly of 30S particles and may also be responsible for determining the conformation of the 16S rRNA at the A site. The polypeptide is Small ribosomal subunit protein uS14 (Methylobacillus flagellatus (strain ATCC 51484 / DSM 6875 / VKM B-1610 / KT)).